Here is a 498-residue protein sequence, read N- to C-terminus: Angiopoietin-4 (498 aa).

Positions 1 to 22 (MPSPPAMLLGGLLLIVASTTVA) are cleaved as a signal peptide. The segment at 51–80 (EPEPCPPEPEAFGGSNSLQRDSPAATLNLG) is disordered. Positions 85–109 (QRMRQLEKMLENNTQWLQKLERYIQ) form a coiled coil. Asn96, Asn126, Asn158, Asn247, Asn295, Asn306, Asn332, and Asn424 each carry an N-linked (GlcNAc...) asparagine glycan. Residues 186–254 (HELHRLQGHN…SSNSSLLQRQ (69 aa)) are a coiled coil. The Fibrinogen C-terminal domain maps to 277-497 (RAADQLFQDC…TTRMMVRPSG (221 aa)). The cysteines at positions 286 and 315 are disulfide-linked. Cys439 and Cys452 are disulfide-bonded.

Homodimer; disulfide-linked. Interacts with TEK/TIE2.

It localises to the secreted. Binds to TEK/TIE2, modulating ANGPT1 signaling. Can induce tyrosine phosphorylation of TEK/TIE2. Promotes endothelial cell survival, migration and angiogenesis. The chain is Angiopoietin-4 (ANGPT4) from Bos taurus (Bovine).